Here is a 209-residue protein sequence, read N- to C-terminus: Small ribosomal subunit protein uS3 (209 aa).

Positions 17–86 (IDEFLEKELR…NPQIEVEEIK (70 aa)) constitute a KH type-2 domain.

This sequence belongs to the universal ribosomal protein uS3 family. Part of the 30S ribosomal subunit.

Its function is as follows. Binds the lower part of the 30S subunit head. This Thermococcus kodakarensis (strain ATCC BAA-918 / JCM 12380 / KOD1) (Pyrococcus kodakaraensis (strain KOD1)) protein is Small ribosomal subunit protein uS3.